Consider the following 536-residue polypeptide: Cytochrome P450 monooxygenase fscF (536 aa).

The helical transmembrane segment at 9–29 threads the bilayer; that stretch reads VSWLCALFTAIALYCIAVAFY. C464 is a binding site for heme.

Belongs to the cytochrome P450 family. It depends on heme as a cofactor.

It is found in the membrane. It participates in secondary metabolite biosynthesis. Its function is as follows. Cytochrome P450 monooxygenase; part of the fragmented gene cluster that mediates the biosynthesis of fusarochromene, a tryptophan-derived metabolite closely related to a group of mycotoxins including fusarochromanone. Within the pathway, fscF catalyzes the epoxidation of desacetylfusarochromene which opens the way to the production of fusarochromanones. The first step of the pathway is the epimerization of L-tryptophan to D-tryptophan in the presence of the NRPS-like tryptophan epimerase fscC. D-tryptophan is subsequently hydroxylated by the tryptophan 6-hydroxylase fscE to yield 6-hydroxytryptophan. The pyrrole ring undergoes cleavaged by the tryptophan 2,3-dioxygenase fscD and is finally converted to 4-hydroxykyrunenine by the hydrolase fscH. The NRPS-like oxidoreductase fscA reduces the carboxyl group to primary alcohol and the DMATS-type prenyltransferase fscG performs prenylation, followed by the formation of a chromene ring catalyzed by the oxidoreductase fscI, which leads to desacetylfusarochromene. Epoxidation by fscF and rearrangement reactions of chromene double bonds convert compound desacetylfusarochromene to fusarochromanones. Although specific acetyltransferases were not found near the fsc gene cluster, several predicted enzymes containing the N-acetyltransferase superfamily domain are present in the genome of F.equiseti. These predicted enzymes may have the potential to convert desacetylfusarochromene to fusarochromene. This Fusarium equiseti (Fusarium scirpi) protein is Cytochrome P450 monooxygenase fscF.